A 364-amino-acid chain; its full sequence is Probable dual-specificity RNA methyltransferase RlmN (364 aa).

E107 functions as the Proton acceptor in the catalytic mechanism. One can recognise a Radical SAM core domain in the interval 113–346; it reads HDYGNSVCVT…ATIRREQGSD (234 aa). A disulfide bond links C120 and C351. [4Fe-4S] cluster-binding residues include C127, C131, and C134. Residues 177-178, S209, 232-234, and N308 contribute to the S-adenosyl-L-methionine site; these read GE and SLH. The S-methylcysteine intermediate role is filled by C351.

Belongs to the radical SAM superfamily. RlmN family. Requires [4Fe-4S] cluster as cofactor.

It localises to the cytoplasm. The catalysed reaction is adenosine(2503) in 23S rRNA + 2 reduced [2Fe-2S]-[ferredoxin] + 2 S-adenosyl-L-methionine = 2-methyladenosine(2503) in 23S rRNA + 5'-deoxyadenosine + L-methionine + 2 oxidized [2Fe-2S]-[ferredoxin] + S-adenosyl-L-homocysteine. The enzyme catalyses adenosine(37) in tRNA + 2 reduced [2Fe-2S]-[ferredoxin] + 2 S-adenosyl-L-methionine = 2-methyladenosine(37) in tRNA + 5'-deoxyadenosine + L-methionine + 2 oxidized [2Fe-2S]-[ferredoxin] + S-adenosyl-L-homocysteine. In terms of biological role, specifically methylates position 2 of adenine 2503 in 23S rRNA and position 2 of adenine 37 in tRNAs. Confers resistance to some classes of antibiotics. In Staphylococcus aureus (strain bovine RF122 / ET3-1), this protein is Probable dual-specificity RNA methyltransferase RlmN.